The primary structure comprises 472 residues: MSAHGTNEGALWGGRFESGPAAAMAALSKSTHFDWVLAPYDVRASQAHARVLHKAGLLGDEDLASMLDGLGRLAADVASGEFVPSESDEDVHGALERGLIDRVGPEVGGRLRAGRSRNDQVATLFRMWLRDAVRRVAAGVLDVVDALATQAAAHPSAVMPGKTHLQAAQPVLLAHHLLAHTHPLLRDVQRLRDFDVRAAVSPYGSGALAGSSLGLDPEAIAAELDFDSSAENSIDATSSRDFAAEAAFVLAMIGVDLSRMAEEVILWSTPEFGYITLADAWSTGSSIMPQKKNPDVSELTRGKSGRLIGNLTGLLATLKAQPLAYNRDLQEDKEPVFDSVAQLELLLPAITGLVSTLEFHTDRMAELAPAGFTLATDIAEWLVRQGVPFRVAHEAAGACVRVAEARGVGLEDLTDDELAGVDPALTPDVREVLTVEGSIASRNARGGTAGIRVAEQLGGVRQLSESLREWCR.

The protein belongs to the lyase 1 family. Argininosuccinate lyase subfamily.

The protein localises to the cytoplasm. The catalysed reaction is 2-(N(omega)-L-arginino)succinate = fumarate + L-arginine. The protein operates within amino-acid biosynthesis; L-arginine biosynthesis; L-arginine from L-ornithine and carbamoyl phosphate: step 3/3. This is Argininosuccinate lyase from Rhodococcus jostii (strain RHA1).